The following is a 309-amino-acid chain: Formate-nitrite transporter (309 aa).

Residues 1-19 (MPPNNSKYVLDPVSIKSVC) are Cytoplasmic-facing. Residues 20–35 (GGEESYIRCVEYGKKK) constitute an intramembrane region (helical). Residues 36-40 (AHYSN) are Cytoplasmic-facing. Residues 41–68 (LNLLAKAILAGMFVGLCAHASGIAGGLF) traverse the membrane as a helical segment. Residues 69–79 (YYHKLREIVGA) are Extracellular-facing. Residues 80–100 (SMSVFVYGFTFPIAFMCIICT) form a helical membrane-spanning segment. The Cytoplasmic segment spans residues 101–122 (GSDLFTGNTLAVTMALYEKKVK). The chain crosses the membrane as a helical span at residues 123 to 150 (LLDYLRVMTISLFGNYVGAVSFAFFVSY). Residues 151 to 163 (LSGAFTNVHAVEK) are Extracellular-facing. Residues 164-179 (NHFFQFLNDIAEKKVH) constitute an intramembrane region (helical). Topologically, residues 180-181 (HT) are extracellular. A helical membrane pass occupies residues 182-206 (FVECVSLAVGCNIFVCLAVYFVLTL). Residues 207-209 (KDG) are Cytoplasmic-facing. Residues 210 to 226 (AGYVFSVFFAVYAFAIA) traverse the membrane as a helical segment. The Extracellular segment spans residues 227–249 (GYEHIIANIYTLNIALMVNTKIT). The chain crosses the membrane as a helical span at residues 250–280 (VYQAYIKNLLPTLLGNYIAGAIVLGLPLYFI). The Cytoplasmic segment spans residues 281–309 (YKEHYYNFERSKRDNNDAQMKSLSIELRN).

This sequence belongs to the FNT transporter (TC 1.A.16) family. Homopentamer.

It localises to the cell membrane. It is found in the vacuole membrane. It catalyses the reaction (S)-lactate(in) + H(+)(in) = (S)-lactate(out) + H(+)(out). The enzyme catalyses formate(in) + H(+)(in) = formate(out) + H(+)(out). The catalysed reaction is pyruvate(out) + H(+)(out) = pyruvate(in) + H(+)(in). It carries out the reaction acetate(out) + H(+)(out) = acetate(in) + H(+)(in). Its activity is regulated as follows. Inhibited by diethylpyrocarbonate (DEPC). Protonophores, such as 2,4-dinitrophenol and carbonylcyanide-3-chlorophenylhydrazone, abolish transport. Inhibited by phloretin, furosemide, alpha-cyano-4-hydroxy-cinnamate and alpha-fluorocinnamate. Inhibited by the Malaria Box compound MMV007839 and its derivatives BH296 and BH267.meta. Inhibited by the Malaria Box compound MMV000972. Inhibited by broad-specificity anion transport inhibitor NPPB. Functionally, monocarboxylate-proton symporter that mediates the efflux of the waste product lactate in the intraerythrocytic parasites; active in acidic-to-neutral pH range. Transports L-lactate. Transports D-lactate, pyruvate, acetate and formate. Essential for asexual growth but dispensable for the development of gametocytes. The protein is Formate-nitrite transporter of Plasmodium falciparum (isolate 3D7).